Reading from the N-terminus, the 349-residue chain is Flavonol synthase/flavanone 3-hydroxylase (349 aa).

One can recognise a Fe2OG dioxygenase domain in the interval 213 to 310; the sequence is DIVYMLKINY…RMSWPVFLEP (98 aa). Fe cation contacts are provided by His-238, Asp-240, and His-291.

This sequence belongs to the iron/ascorbate-dependent oxidoreductase family. Fe cation is required as a cofactor. It depends on L-ascorbate as a cofactor.

It localises to the cytoplasm. The catalysed reaction is a (2R,3R)-dihydroflavonol + 2-oxoglutarate + O2 = a flavonol + succinate + CO2 + H2O. The enzyme catalyses a (2S)-flavan-4-one + 2-oxoglutarate + O2 = a (2R,3R)-dihydroflavonol + succinate + CO2. It participates in secondary metabolite biosynthesis; flavonoid biosynthesis. Catalyzes the formation of flavonols from dihydroflavonols. It can act on dihydrokaempferol to produce kaempferol, on dihydroquercetin to produce quercitin and on dihydromyricetin to produce myricetin. The chain is Flavonol synthase/flavanone 3-hydroxylase from Solanum tuberosum (Potato).